The primary structure comprises 56 residues: Large ribosomal subunit protein bL32 (56 aa).

Residues 1-16 (MAVQKSKKSRSMRGMR) are compositionally biased toward basic residues. The disordered stretch occupies residues 1–22 (MAVQKSKKSRSMRGMRRSHDAL).

Belongs to the bacterial ribosomal protein bL32 family.

This is Large ribosomal subunit protein bL32 from Aliivibrio salmonicida (strain LFI1238) (Vibrio salmonicida (strain LFI1238)).